Consider the following 1846-residue polypeptide: Insulin-like receptor (1846 aa).

N-linked (GlcNAc...) asparagine glycosylation is found at N113, N180, and N364. 5 cysteine pairs are disulfide-bonded: C371/C386, C393/C401, C397/C410, C413/C422, and C426/C438. N453 carries N-linked (GlcNAc...) asparagine glycosylation. Intrachain disulfides connect C469-C483 and C486-C490. N518 is a glycosylation site (N-linked (GlcNAc...) asparagine). Residues C615 and C646 are joined by a disulfide bond. N-linked (GlcNAc...) asparagine glycosylation is found at N652, N671, and N696. Fibronectin type-III domains lie at 775–869, 969–1067, and 1077–1179; these read TPDP…TMMG, KPSS…LKRT, and LNET…TPGF. Residues 944 to 980 form a disordered region; it reads EKAENLGKAPKTLGGKKPLIHISKKKPSSSSTTSTPA. Residues 961-970 show a composition bias toward basic residues; the sequence is PLIHISKKKP. Over 970-1183 the chain is Extracellular; sequence PSSSSTTSTP…VMTPGFFTVE (214 aa). Positions 971–980 are enriched in low complexity; it reads SSSSTTSTPA. Residues N1017, N1047, N1078, N1087, and N1093 are each glycosylated (N-linked (GlcNAc...) asparagine). A helical transmembrane segment spans residues 1184–1204; that stretch reads IILGMLLVFLILMSIAGCIIY. The Cytoplasmic portion of the chain corresponds to 1205–1846; the sequence is YYIQVRYGKK…IEDNEHHPLV (642 aa). The region spanning 1246-1528 is the Protein kinase domain; the sequence is VVLGQQCGEG…LLAAEASPEF (283 aa). ATP is bound by residues 1252–1260 and K1282; that span reads CGEGSFGKV. The active-site Proton acceptor is D1388. 2 disordered regions span residues 1718-1742 and 1769-1826; these read ISSM…TNWS and QQQQ…IFNG. The segment covering 1726–1742 has biased composition (polar residues); that stretch reads STGASSSSYGVPQTNWS. Residues 1808-1821 are compositionally biased toward low complexity; that stretch reads YRNNGSPSRNGNSR.

Belongs to the protein kinase superfamily. Tyr protein kinase family. Insulin receptor subfamily. Tetramer of 2 alpha and 2 beta chains linked by disulfide bonds. The alpha chains contribute to the formation of the ligand-binding domain, while the beta chains carry the kinase domain. Interacts (via cytoplasmic domain) with shc-1 (PID domain). Interacts (via kinase domain) with daf-18 (via C-terminus). As to quaternary structure, interacts with casy-1; promoting axonal localization. Mg(2+) serves as cofactor.

It localises to the membrane. Its subcellular location is the cell projection. It is found in the axon. It catalyses the reaction L-tyrosyl-[protein] + ATP = O-phospho-L-tyrosyl-[protein] + ADP + H(+). Autophosphorylation activates the kinase activity. Interaction with shc-1 may inhibit its activity. Its function is as follows. Insulin receptor-like tyrosine kinase which regulates metabolism, controls longevity and prevents developmental arrest at the dauer stage. Binding of INS family members may either stimulate, or antagonize, association of the receptor with downstream mediators such as pdk-1 and age-1. Required for germline progenitor proliferation during larval development. Plays a role in maintaining gonad integrity in a daf-16/FOXO-dependent manner. Required for the response to environmental stimuli such as light, food, pheromone, and temperature. Negatively regulates resistance to UV and oxidative stress. In a daf-16/FOXO-dependent manner, plays a role in regulating the response to white light. Role in immune function and pathogen resistance. Negatively regulates autophagy. Regulates daf-18/PTEN protein levels. Plays a role in controlling seam cell development during the larval stages. Functionally, required for taste avoidance learning in the cell body of ASER gustatory neurons. In terms of biological role, required for taste avoidance learning in axons of ASER gustatory neurons. The chain is Insulin-like receptor from Caenorhabditis elegans.